Here is a 456-residue protein sequence, read N- to C-terminus: Exodeoxyribonuclease 7 large subunit (456 aa).

Residues 1-103 form a binds ssDNA, also required to bind the small subunit region; sequence MLPSQSPAIF…DYQIIVESMQ (103 aa).

Belongs to the XseA family. In terms of assembly, heterooligomer composed of two different subunits with an approximate ratio of 4:1 for small to large subunit. Also estimated to have a 6:1 ration for small to large subunits. It depends on Does not require a metal cofactor. as a cofactor.

It localises to the cytoplasm. It catalyses the reaction Exonucleolytic cleavage in either 5'- to 3'- or 3'- to 5'-direction to yield nucleoside 5'-phosphates.. Functionally, bidirectionally degrades single-stranded DNA into large acid-insoluble oligonucleotides, which are then degraded further into small acid-soluble oligonucleotides. It can degrade 3' or 5' ss regions extending from the termini of duplex DNA molecules and displaced ss regions. It can also excise thymine dimers in vitro. ssDNA-binding requires both subunits. Required for production of the mature 5'-end of retron Ec78 or Ec83 msDNA. Overproduction of this subunit in the absence of an equivalent quantity of the small subunit is toxic, causing cell elongation and chromosome fragmentation or loss; its toxicity is mostly suppressed by RecA. This Escherichia coli (strain K12) protein is Exodeoxyribonuclease 7 large subunit.